The following is a 355-amino-acid chain: Gentisate 1,2-dioxygenase (355 aa).

The Cupin type-2 domain maps to 106-174; it reads MQLLLPGEWA…GNEPVVWLDV (69 aa).

The protein belongs to the gentisate 1,2-dioxygenase family.

The catalysed reaction is 2,5-dihydroxybenzoate + O2 = 3-maleylpyruvate + H(+). It participates in aromatic compound metabolism; naphthalene degradation. In terms of biological role, catalyzes the oxygen-dependent ring fission of gentisate between the carboxyl and proximal hydroxyl groups at positions 1 and 2 of the aromatic ring to form maleylpyruvate. Can also catalyze oxidation of alkyl- and halogenated gentisates. Exhibits higher affinity for 3-substituted gentisates than for gentisate but has higher activity with gentisate. The polypeptide is Gentisate 1,2-dioxygenase (Ralstonia sp).